The sequence spans 887 residues: Probable LRR receptor-like serine/threonine-protein kinase At5g59680 (887 aa).

The signal sequence occupies residues 1 to 23; sequence MERSLELLLLLIRTLAIIHISQA. At 25 to 510 the chain is on the extracellular side; it reads SQQGFISLDC…TKSGKSFPVT (486 aa). N143, N230, N256, N289, N338, N363, N400, N416, N432, N445, N464, and N471 each carry an N-linked (GlcNAc...) asparagine glycan. LRR repeat units follow at residues 411 to 434, 435 to 457, and 459 to 481; these read RITTLNLSSSGLTGTITAAIQNLT, TLEKLDLSNNNLTGEVPEFLSNM, and SLLVINLSGNDLNGTIPQSLQRK. A helical membrane pass occupies residues 511 to 531; that stretch reads IVASVGSAAILIVVLVLVLFL. Residues 532–887 lie on the Cytoplasmic side of the membrane; the sequence is RKKKPSAVEV…FDAEMIPRAR (356 aa). T571 is subject to Phosphothreonine. The Protein kinase domain maps to 580-853; the sequence is NNFGRVVGEG…HVVIELKECL (274 aa). ATP is bound by residues 586-594 and K608; that span reads VGEGGFGVV. The residue at position 653 (Y653) is a Phosphotyrosine. D705 serves as the catalytic Proton acceptor. Position 739 is a phosphoserine (S739). Residues T740 and T745 each carry the phosphothreonine modification. Y753 is subject to Phosphotyrosine.

It belongs to the protein kinase superfamily. Ser/Thr protein kinase family.

The protein resides in the membrane. The enzyme catalyses L-seryl-[protein] + ATP = O-phospho-L-seryl-[protein] + ADP + H(+). The catalysed reaction is L-threonyl-[protein] + ATP = O-phospho-L-threonyl-[protein] + ADP + H(+). In Arabidopsis thaliana (Mouse-ear cress), this protein is Probable LRR receptor-like serine/threonine-protein kinase At5g59680.